Consider the following 229-residue polypeptide: Large ribosomal subunit protein uL1 (229 aa).

This sequence belongs to the universal ribosomal protein uL1 family. Part of the 50S ribosomal subunit.

Binds directly to 23S rRNA. The L1 stalk is quite mobile in the ribosome, and is involved in E site tRNA release. Its function is as follows. Protein L1 is also a translational repressor protein, it controls the translation of the L11 operon by binding to its mRNA. The chain is Large ribosomal subunit protein uL1 from Chlorobium chlorochromatii (strain CaD3).